Reading from the N-terminus, the 1842-residue chain is Plexin-B2 (1842 aa).

A signal peptide spans methionine 1 to serine 19. A Sema domain is found at leucine 20–valine 468. The Extracellular segment spans residues leucine 20–proline 1201. Intrachain disulfides connect cysteine 78–cysteine 87 and cysteine 112–cysteine 120. Residues asparagine 127 and asparagine 242 are each glycosylated (N-linked (GlcNAc...) asparagine). 3 disulfides stabilise this stretch: cysteine 250–cysteine 366, cysteine 266–cysteine 313, and cysteine 331–cysteine 353. N-linked (GlcNAc...) asparagine glycosylation is found at asparagine 393 and asparagine 451. Intrachain disulfides connect cysteine 471–cysteine 488, cysteine 477–cysteine 520, cysteine 480–cysteine 497, cysteine 491–cysteine 503, and cysteine 557–cysteine 576. Asparagine 798 carries an N-linked (GlcNAc...) asparagine glycan. 3 IPT/TIG domains span residues proline 806–tyrosine 895, proline 898–tyrosine 982, and proline 986–tyrosine 1095. Residues asparagine 919, asparagine 1053, and asparagine 1072 are each glycosylated (N-linked (GlcNAc...) asparagine). Residues leucine 1202 to tyrosine 1222 traverse the membrane as a helical segment. Topologically, residues cysteine 1223–leucine 1842 are cytoplasmic. Residues serine 1240, serine 1248, and serine 1574 each carry the phosphoserine modification.

This sequence belongs to the plexin family. In terms of assembly, monomer, and heterodimer with PLXNB1. Interacts with MET, ARHGEF11 and ARHGEF12. May also interact with MST1R. As to expression, detected in macrophages from spleen and bone marrow (at protein level). Detected in granule cells in the developing cerebellum, dentate gyrus and olfactory bulb. Expressed in neurons and glia in the developing hippocampus.

Its subcellular location is the cell membrane. Cell surface receptor for SEMA4C, SEMA4D and SEMA4G that plays an important role in cell-cell signaling. Plays a role in glutamatergic synapse development and is required for SEMA4A-mediated excitatory synapse development. Binding to class 4 semaphorins promotes downstream activation of RHOA and phosphorylation of ERBB2 at 'Tyr-1248'. Also acts as a cell surface receptor for angiogenin (ANG); promoting ANG endocytosis and translocation to the cytoplasm or nucleus. Required for normal differentiation and migration of neuronal cells during brain corticogenesis and for normal embryonic brain development. Regulates the migration of cerebellar granule cells in the developing brain. Plays a role in RHOA activation and subsequent changes of the actin cytoskeleton. Plays a role in axon guidance, invasive growth and cell migration. May modulate the activity of RAC1 and CDC42. Down-regulates macrophage migration in wound-healing assays (in vitro). This chain is Plexin-B2, found in Mus musculus (Mouse).